Consider the following 455-residue polypeptide: Probable glycine dehydrogenase (decarboxylating) subunit 1 (455 aa).

This sequence belongs to the GcvP family. N-terminal subunit subfamily. The glycine cleavage system is composed of four proteins: P, T, L and H. In this organism, the P 'protein' is a heterodimer of two subunits.

The catalysed reaction is N(6)-[(R)-lipoyl]-L-lysyl-[glycine-cleavage complex H protein] + glycine + H(+) = N(6)-[(R)-S(8)-aminomethyldihydrolipoyl]-L-lysyl-[glycine-cleavage complex H protein] + CO2. In terms of biological role, the glycine cleavage system catalyzes the degradation of glycine. The P protein binds the alpha-amino group of glycine through its pyridoxal phosphate cofactor; CO(2) is released and the remaining methylamine moiety is then transferred to the lipoamide cofactor of the H protein. This chain is Probable glycine dehydrogenase (decarboxylating) subunit 1, found in Saccharolobus solfataricus (strain ATCC 35092 / DSM 1617 / JCM 11322 / P2) (Sulfolobus solfataricus).